Consider the following 513-residue polypeptide: 2-isopropylmalate synthase (513 aa).

One can recognise a Pyruvate carboxyltransferase domain in the interval 4 to 268; sequence IKIFDTTLRD…ETGIKTELIY (265 aa). Mn(2+)-binding residues include Asp-13, His-203, His-205, and Asn-239. Residues 392–513 are regulatory domain; that stretch reads KLVHFHVHTG…GLLRKNGGAE (122 aa).

This sequence belongs to the alpha-IPM synthase/homocitrate synthase family. LeuA type 1 subfamily. In terms of assembly, homodimer. Requires Mn(2+) as cofactor.

The protein resides in the cytoplasm. The catalysed reaction is 3-methyl-2-oxobutanoate + acetyl-CoA + H2O = (2S)-2-isopropylmalate + CoA + H(+). Its pathway is amino-acid biosynthesis; L-leucine biosynthesis; L-leucine from 3-methyl-2-oxobutanoate: step 1/4. Catalyzes the condensation of the acetyl group of acetyl-CoA with 3-methyl-2-oxobutanoate (2-ketoisovalerate) to form 3-carboxy-3-hydroxy-4-methylpentanoate (2-isopropylmalate). The chain is 2-isopropylmalate synthase from Thermotoga petrophila (strain ATCC BAA-488 / DSM 13995 / JCM 10881 / RKU-1).